A 249-amino-acid chain; its full sequence is Caffeoyl-CoA O-methyltransferase (249 aa).

Lys-21 is a binding site for substrate. Residues Thr-63, Glu-85, 87–88 (GV), Ser-93, Asp-111, and Ala-140 contribute to the S-adenosyl-L-methionine site. Substrate is bound at residue Asp-162. An a divalent metal cation-binding site is contributed by Asp-162. S-adenosyl-L-methionine is bound at residue Asp-164. Residues Asp-188 and Asn-189 each contribute to the a divalent metal cation site. Asn-193 provides a ligand contact to substrate.

It belongs to the class I-like SAM-binding methyltransferase superfamily. Cation-dependent O-methyltransferase family. CCoAMT subfamily. In terms of assembly, homodimer. A divalent metal cation is required as a cofactor.

It catalyses the reaction (E)-caffeoyl-CoA + S-adenosyl-L-methionine = (E)-feruloyl-CoA + S-adenosyl-L-homocysteine + H(+). The protein operates within aromatic compound metabolism; phenylpropanoid biosynthesis. Its function is as follows. Methylates caffeoyl-CoA to feruloyl-CoA and 5-hydroxyferuloyl-CoA to sinapoyl-CoA. Plays a role in the synthesis of feruloylated polysaccharides. Involved in the reinforcement of the plant cell wall. Also involved in the responding to wounding or pathogen challenge by the increased formation of cell wall-bound ferulic acid polymers. The sequence is that of Caffeoyl-CoA O-methyltransferase from Eucalyptus gunnii (Cider gum).